The sequence spans 710 residues: Polyribonucleotide nucleotidyltransferase (710 aa).

Residues D485 and D491 each contribute to the Mg(2+) site. A KH domain is found at 552–611; sequence PKILTLTINPDKIRDVIGPSGKVINKIIEETGVKIDIEQDGTVYISSLDTAMNQKAKQII. Residues 621–689 form the S1 motif domain; that stretch reads GETYHGKVKR…NQGRVNLSRK (69 aa).

Belongs to the polyribonucleotide nucleotidyltransferase family. Requires Mg(2+) as cofactor.

The protein localises to the cytoplasm. It carries out the reaction RNA(n+1) + phosphate = RNA(n) + a ribonucleoside 5'-diphosphate. In terms of biological role, involved in mRNA degradation. Catalyzes the phosphorolysis of single-stranded polyribonucleotides processively in the 3'- to 5'-direction. The protein is Polyribonucleotide nucleotidyltransferase of Shouchella clausii (strain KSM-K16) (Alkalihalobacillus clausii).